A 650-amino-acid chain; its full sequence is Probable Xaa-Pro aminopeptidase P (650 aa).

Mn(2+)-binding residues include aspartate 447, aspartate 458, glutamate 556, and glutamate 570.

This sequence belongs to the peptidase M24B family. The cofactor is Mn(2+).

The enzyme catalyses Release of any N-terminal amino acid, including proline, that is linked to proline, even from a dipeptide or tripeptide.. In terms of biological role, catalyzes the removal of a penultimate prolyl residue from the N-termini of peptides. This Phaeosphaeria nodorum (strain SN15 / ATCC MYA-4574 / FGSC 10173) (Glume blotch fungus) protein is Probable Xaa-Pro aminopeptidase P (AMPP).